Here is a 380-residue protein sequence, read N- to C-terminus: Cytochrome b (380 aa).

The next 4 membrane-spanning stretches (helical) occupy residues 33–53 (FGSL…FLAM), 77–98 (WLIR…YLHI), 113–133 (WNVG…GYVL), and 178–198 (FFAF…LHLL). The heme b site is built by His83 and His97. Residues His182 and His196 each coordinate heme b. His201 is a binding site for a ubiquinone. Transmembrane regions (helical) follow at residues 226–246 (YKDL…ALFS), 288–308 (LGGV…PILH), 320–340 (FSQI…WIGG), and 347–367 (YIII…VFFP).

It belongs to the cytochrome b family. As to quaternary structure, the cytochrome bc1 complex contains 3 respiratory subunits (MT-CYB, CYC1 and UQCRFS1), 2 core proteins (UQCRC1 and UQCRC2) and probably 6 low-molecular weight proteins. It depends on heme b as a cofactor.

The protein resides in the mitochondrion inner membrane. Functionally, component of the ubiquinol-cytochrome c reductase complex (complex III or cytochrome b-c1 complex) that is part of the mitochondrial respiratory chain. The b-c1 complex mediates electron transfer from ubiquinol to cytochrome c. Contributes to the generation of a proton gradient across the mitochondrial membrane that is then used for ATP synthesis. This is Cytochrome b (mt-cyb) from Apogon semilineatus (Half-lined cardinal).